A 278-amino-acid chain; its full sequence is Probable aquaporin PIP2-8 (278 aa).

At M1 the chain carries N-acetylmethionine. Topologically, residues 1–36 are cytoplasmic; the sequence is MSKEVSEEGRHGKDYVDPPPAPLLDMAELKLWSFYR. K3 carries the post-translational modification N6,N6-dimethyllysine. The helical transmembrane segment at 37–57 threads the bilayer; that stretch reads AIIAEFIATLLFLYVTVATVI. Topologically, residues 58–74 are extracellular; sequence GHKNQTGPCGGVGLLGI. Residues 75 to 95 form a helical membrane-spanning segment; the sequence is AWAFGGMIFVLVYCTAGISGG. Over 96 to 116 the chain is Cytoplasmic; it reads HINPAVTFGLFLARKVSLPRA. Residues 98-100 carry the NPA 1 motif; it reads NPA. A helical transmembrane segment spans residues 117-137; sequence VAYMVAQCLGAICGVGLVKAF. Residues 138–158 are Extracellular-facing; that stretch reads MMTPYKRLGGGANTVADGYST. A helical membrane pass occupies residues 159-179; the sequence is GTALGAEIIGTFVLVYTVFSA. The Cytoplasmic portion of the chain corresponds to 180 to 192; it reads TDPKRSARDSHVP. A helical transmembrane segment spans residues 193–213; the sequence is VLAPLPIGFAVFMVHLATIPI. Residues 214–240 lie on the Extracellular side of the membrane; the sequence is TGTGINPARSFGAAVIYNNEKAWDDHW. An NPA 2 motif is present at residues 219–221; that stretch reads NPA. Residues 241-261 form a helical membrane-spanning segment; sequence IFWVGPFVGALAAAAYHQYIL. The Cytoplasmic portion of the chain corresponds to 262-278; it reads RAAAIKALASFRSNPTN. Residues S271 and S274 each carry the phosphoserine modification.

It belongs to the MIP/aquaporin (TC 1.A.8) family. PIP (TC 1.A.8.11) subfamily. In terms of tissue distribution, expressed in roots and floral buds.

Its subcellular location is the cell membrane. Its function is as follows. Aquaporins facilitate the transport of water and small neutral solutes across cell membranes. The sequence is that of Probable aquaporin PIP2-8 (PIP2-8) from Arabidopsis thaliana (Mouse-ear cress).